We begin with the raw amino-acid sequence, 206 residues long: ATP-dependent Clp protease proteolytic subunit 1 (206 aa).

Catalysis depends on S100, which acts as the Nucleophile. The active site involves H125.

The protein belongs to the peptidase S14 family. In terms of assembly, fourteen ClpP subunits assemble into 2 heptameric rings which stack back to back to give a disk-like structure with a central cavity, resembling the structure of eukaryotic proteasomes.

It localises to the cytoplasm. It carries out the reaction Hydrolysis of proteins to small peptides in the presence of ATP and magnesium. alpha-casein is the usual test substrate. In the absence of ATP, only oligopeptides shorter than five residues are hydrolyzed (such as succinyl-Leu-Tyr-|-NHMec, and Leu-Tyr-Leu-|-Tyr-Trp, in which cleavage of the -Tyr-|-Leu- and -Tyr-|-Trp bonds also occurs).. In terms of biological role, cleaves peptides in various proteins in a process that requires ATP hydrolysis. Has a chymotrypsin-like activity. Plays a major role in the degradation of misfolded proteins. The polypeptide is ATP-dependent Clp protease proteolytic subunit 1 (Myxococcus xanthus (strain DK1622)).